The chain runs to 80 residues: Exodeoxyribonuclease 7 small subunit (80 aa).

It belongs to the XseB family. Heterooligomer composed of large and small subunits.

The protein resides in the cytoplasm. The enzyme catalyses Exonucleolytic cleavage in either 5'- to 3'- or 3'- to 5'-direction to yield nucleoside 5'-phosphates.. Its function is as follows. Bidirectionally degrades single-stranded DNA into large acid-insoluble oligonucleotides, which are then degraded further into small acid-soluble oligonucleotides. In Marinomonas sp. (strain MWYL1), this protein is Exodeoxyribonuclease 7 small subunit.